The chain runs to 408 residues: Tryptophan--tRNA ligase, chloroplastic/mitochondrial (408 aa).

The transit peptide at 1 to 52 (MGHATSLSHFLILSSSRFSRLGSLTRLLSKPTSLSGSFSSISVTGQGFRCCC) directs the protein to the chloroplast and mitochondrion. N-acetylserine is present on Ser-53. Residues Gln-72 and 78–81 (HLGN) each bind ATP. The short motif at 73-81 (PTGSVHLGN) is the 'HIGH' region element. Asp-197 provides a ligand contact to L-tryptophan. Residues 209–211 (GED), Val-260, 269–273 (KMSKS), and Lys-272 each bind ATP. Positions 269 to 273 (KMSKS) match the 'KMSKS' region motif.

The protein belongs to the class-I aminoacyl-tRNA synthetase family.

The protein resides in the plastid. It localises to the chloroplast. It is found in the mitochondrion. The catalysed reaction is tRNA(Trp) + L-tryptophan + ATP = L-tryptophyl-tRNA(Trp) + AMP + diphosphate + H(+). The protein is Tryptophan--tRNA ligase, chloroplastic/mitochondrial of Arabidopsis thaliana (Mouse-ear cress).